We begin with the raw amino-acid sequence, 231 residues long: MASAVFEGTSLVNMFVRGCWVNGIRRLIVSRRGDEEEFFEIRTEWSDRSVLYLHRSLADLGRLWQRLRDAFPEDRSELAQGPLRQGLVAIKEAHDIETRLNEVEKLLKTIISMPCKYSRSEVVLTFFERSPLDQVLKNDNVHKIQPSFQSPVKISEIMRSNGFCLANTETIVIDHSIPNGRDQQLGVDPTEHLFENGSEFPSELEDGDDPAAYVTNLSYYHLVPFETDIWD.

The region spanning 1-134 is the PX domain; the sequence is MASAVFEGTS…TFFERSPLDQ (134 aa).

This Homo sapiens (Human) protein is PX domain-containing protein 1 (PXDC1).